Consider the following 658-residue polypeptide: Sulfate transporter 3.1 (658 aa).

At 1 to 85 (MGTEDYTFPQ…RYNLKFFKSD (85 aa)) the chain is on the cytoplasmic side. Residues 86 to 106 (LIAGITIASLAIPQGISYAKL) form a helical membrane-spanning segment. Residues 107–108 (AN) lie on the Extracellular side of the membrane. Residues 109 to 129 (LPPILGLYSSFVPPLVYAVLG) form a helical membrane-spanning segment. At 130-133 (SSRD) the chain is on the cytoplasmic side. The helical transmembrane segment at 134–154 (LAVGTVAVASLLTGAMLSKEV) threads the bilayer. Over 155–163 (DAEKDPKLY) the chain is Extracellular. A helical transmembrane segment spans residues 164 to 184 (LHLAFTATFFAGVLEASLGIF). Arg185 is a topological domain (cytoplasmic). A helical membrane pass occupies residues 186–206 (LGFIVDFLSHATIVGFMGGAA). Over 207 to 245 (TVVSLQQLKGIFGLKHFTDSTDVISVMRSVFSQTHEWRW) the chain is Extracellular. A helical transmembrane segment spans residues 246-266 (ESGVLGCGFLFFLLSTRYFSI). The Cytoplasmic portion of the chain corresponds to 267–271 (KKPKF). Residues 272-292 (FWVAAMAPLTSVILGSLLVYF) traverse the membrane as a helical segment. Residues 293-332 (THAERHGVQVIGDLKKGLNPLSGSDLIFTSPYMSTAVKTG) lie on the Extracellular side of the membrane. Residues 333-353 (LITGIIALAEGVAVGRSFAMF) traverse the membrane as a helical segment. Topologically, residues 354–363 (KNYNIDGNKE) are cytoplasmic. A helical membrane pass occupies residues 364-384 (MIAFGMMNIVGSFTSCYLTTG). Topologically, residues 385-398 (PFSRSAVNYNAGCK) are extracellular. Residues 399 to 419 (TAMSNIVMAIAVMFTLLFLTP) traverse the membrane as a helical segment. The Cytoplasmic segment spans residues 420 to 425 (LFHYTP). The chain crosses the membrane as a helical span at residues 426–446 (LVVLSAIIISAMLGLIDYQAA). Residues 447 to 464 (IHLWKVDKFDFLVCMSAY) are Extracellular-facing. Residues 465 to 485 (VGVVFGSVEIGLVVAVAISIA) traverse the membrane as a helical segment. Residues 486–658 (RLLLFVSRPK…ASKNEPWNNV (173 aa)) are Cytoplasmic-facing. The STAS domain maps to 513 to 637 (QYPSSRTVPG…LTVGEAVEAC (125 aa)).

The protein belongs to the SLC26A/SulP transporter (TC 2.A.53) family. Expressed only in leaves.

It localises to the membrane. Functionally, h(+)/sulfate cotransporter that may play a role in the regulation of sulfate assimilation. This Arabidopsis thaliana (Mouse-ear cress) protein is Sulfate transporter 3.1 (SULTR3;1).